The following is a 371-amino-acid chain: MIRIAVDAMGGDVGPDVTVPASLAFLSGHPEAALVLVGQPDVLAAHPQYALLQSHPRCQFVAASEVVTMDDPIEIALRRKKNSSMRVAMNQVKEGVAQAAVSAGNTGALMAIARYVLKTMEGIDRPAIATQLPNAAGGATTVLDLGANVDCTADHLLQFAVMGSALVAAISGKPAPSVGLLNIGEEAIKGSEIIKKAGDLLRSASISGDLNFYGNVEGNDIFKGTTDIVVCDGFVGNVALKASEGLASMIGGFIKAEFSRNILTKFAAIVAYPVLTAFKNRVDHRRYNGAALLGLQGLVFKSHGSADAFAFERALNRAYDAARNNLLERVRERIAHAAPLLLVAAQMAPASDGVSAVSSMAVDPAVSTPAH.

The protein belongs to the PlsX family. In terms of assembly, homodimer. Probably interacts with PlsY.

The protein localises to the cytoplasm. It catalyses the reaction a fatty acyl-[ACP] + phosphate = an acyl phosphate + holo-[ACP]. It functions in the pathway lipid metabolism; phospholipid metabolism. In terms of biological role, catalyzes the reversible formation of acyl-phosphate (acyl-PO(4)) from acyl-[acyl-carrier-protein] (acyl-ACP). This enzyme utilizes acyl-ACP as fatty acyl donor, but not acyl-CoA. This Polaromonas sp. (strain JS666 / ATCC BAA-500) protein is Phosphate acyltransferase.